Reading from the N-terminus, the 147-residue chain is Ribosome maturation factor RimP (147 aa).

The protein belongs to the RimP family.

It is found in the cytoplasm. Required for maturation of 30S ribosomal subunits. The sequence is that of Ribosome maturation factor RimP from Legionella pneumophila (strain Paris).